The chain runs to 212 residues: UPF0111 protein PH1389 (212 aa).

The protein belongs to the UPF0111 family.

The chain is UPF0111 protein PH1389 from Pyrococcus horikoshii (strain ATCC 700860 / DSM 12428 / JCM 9974 / NBRC 100139 / OT-3).